Reading from the N-terminus, the 507-residue chain is Tryptamine 4-monooxygenase (507 aa).

A signal peptide spans 1-19 (MIVLLVSLVLAGCIYYANA). Residues 403–425 (PNPSEFRPERYLSSDGKPDPTVR) form a disordered region. Positions 408–425 (FRPERYLSSDGKPDPTVR) are enriched in basic and acidic residues. Heme is bound at residue Cys439.

Belongs to the cytochrome P450 family. Heme is required as a cofactor.

It catalyses the reaction tryptamine + AH2 + O2 = 4-hydroxytryptamine + A + H2O. The protein operates within secondary metabolite biosynthesis. Tryptamine 4-monooxygenase; part of the gene cluster that mediates the biosynthesis of psilocybin, a psychotropic tryptamine-derived natural product. The first step in the pathway is the decarboxylation of L-tryptophan to tryptamine by the decarboxylase psiD. PsiD does not decarboxylate phenylalanine, tyrosine, or 5-hydroxy- L -tryptophan (5-HTP). 4-hydroxy-L-tryptophan is accepted as substrate by psiD as well. The cytochrome P450 monooxygenase psiH then converts tryptamine to 4-hydroxytryptamine. The kinase psiK catalyzes the 4-O-phosphorylation step by converting 4-hydroxytryptamine into norbaeocystin. The methyltransferase psiM then catalyzes iterative methyl transfer to the amino group of norbaeocystin to yield psilocybin via a monomethylated intermediate, baeocystin. The polypeptide is Tryptamine 4-monooxygenase (Psilocybe cyanescens).